A 579-amino-acid polypeptide reads, in one-letter code: Potassium-transporting ATPase potassium-binding subunit (579 aa).

The next 10 helical transmembrane spans lie at Met-1–Val-21, His-64–Gln-84, Gly-135–Ile-155, Ile-178–Val-198, Phe-265–Met-285, Trp-293–Ala-313, Gly-398–Gly-418, Met-435–Val-455, Trp-503–Ala-523, and Leu-549–Gly-569.

It belongs to the KdpA family. The system is composed of three essential subunits: KdpA, KdpB and KdpC.

The protein resides in the cell membrane. Functionally, part of the high-affinity ATP-driven potassium transport (or Kdp) system, which catalyzes the hydrolysis of ATP coupled with the electrogenic transport of potassium into the cytoplasm. This subunit binds the extracellular potassium ions and delivers the ions to the membrane domain of KdpB through an intramembrane tunnel. This is Potassium-transporting ATPase potassium-binding subunit from Herpetosiphon aurantiacus (strain ATCC 23779 / DSM 785 / 114-95).